The sequence spans 427 residues: Putative ABC transporter substrate-binding protein YesO (427 aa).

The protein belongs to the bacterial solute-binding protein 1 family.

May play a role in the degradation of type I rhamnogalacturonan derived from plant cell walls. In Bacillus subtilis (strain 168), this protein is Putative ABC transporter substrate-binding protein YesO (yesO).